A 341-amino-acid polypeptide reads, in one-letter code: tRNA N6-adenosine threonylcarbamoyltransferase (341 aa).

Fe cation-binding residues include histidine 115 and histidine 119. Residues 137-141 (IVSGG), aspartate 170, glycine 183, aspartate 187, and asparagine 276 contribute to the substrate site. Aspartate 304 contributes to the Fe cation binding site.

The protein belongs to the KAE1 / TsaD family. Requires Fe(2+) as cofactor.

It localises to the cytoplasm. The catalysed reaction is L-threonylcarbamoyladenylate + adenosine(37) in tRNA = N(6)-L-threonylcarbamoyladenosine(37) in tRNA + AMP + H(+). In terms of biological role, required for the formation of a threonylcarbamoyl group on adenosine at position 37 (t(6)A37) in tRNAs that read codons beginning with adenine. Is involved in the transfer of the threonylcarbamoyl moiety of threonylcarbamoyl-AMP (TC-AMP) to the N6 group of A37, together with TsaE and TsaB. TsaD likely plays a direct catalytic role in this reaction. This chain is tRNA N6-adenosine threonylcarbamoyltransferase, found in Staphylococcus aureus (strain MRSA252).